Here is a 427-residue protein sequence, read N- to C-terminus: Glutamate-1-semialdehyde 2,1-aminomutase (427 aa).

K267 is subject to N6-(pyridoxal phosphate)lysine.

Belongs to the class-III pyridoxal-phosphate-dependent aminotransferase family. HemL subfamily. Homodimer. Pyridoxal 5'-phosphate is required as a cofactor.

The protein localises to the cytoplasm. The enzyme catalyses (S)-4-amino-5-oxopentanoate = 5-aminolevulinate. The protein operates within porphyrin-containing compound metabolism; protoporphyrin-IX biosynthesis; 5-aminolevulinate from L-glutamyl-tRNA(Glu): step 2/2. The protein is Glutamate-1-semialdehyde 2,1-aminomutase of Geotalea daltonii (strain DSM 22248 / JCM 15807 / FRC-32) (Geobacter daltonii).